A 333-amino-acid chain; its full sequence is Anthranilate phosphoribosyltransferase (333 aa).

5-phospho-alpha-D-ribose 1-diphosphate-binding positions include Gly-81, 84–85 (GD), Thr-89, 91–94 (NIST), 109–117 (KHGNRSVSS), and Ser-121. Residue Gly-81 coordinates anthranilate. Ser-93 lines the Mg(2+) pocket. Residue Asn-112 coordinates anthranilate. Arg-167 is an anthranilate binding site. Residues Asp-225 and Glu-226 each coordinate Mg(2+).

This sequence belongs to the anthranilate phosphoribosyltransferase family. In terms of assembly, homodimer. It depends on Mg(2+) as a cofactor.

It carries out the reaction N-(5-phospho-beta-D-ribosyl)anthranilate + diphosphate = 5-phospho-alpha-D-ribose 1-diphosphate + anthranilate. It participates in amino-acid biosynthesis; L-tryptophan biosynthesis; L-tryptophan from chorismate: step 2/5. Its function is as follows. Catalyzes the transfer of the phosphoribosyl group of 5-phosphorylribose-1-pyrophosphate (PRPP) to anthranilate to yield N-(5'-phosphoribosyl)-anthranilate (PRA). In Glaesserella parasuis serovar 5 (strain SH0165) (Haemophilus parasuis), this protein is Anthranilate phosphoribosyltransferase.